The following is a 179-amino-acid chain: Large ribosomal subunit protein uL5 (179 aa).

The protein belongs to the universal ribosomal protein uL5 family. As to quaternary structure, part of the 50S ribosomal subunit; part of the 5S rRNA/L5/L18/L25 subcomplex. Contacts the 5S rRNA and the P site tRNA. Forms a bridge to the 30S subunit in the 70S ribosome.

Its function is as follows. This is one of the proteins that bind and probably mediate the attachment of the 5S RNA into the large ribosomal subunit, where it forms part of the central protuberance. In the 70S ribosome it contacts protein S13 of the 30S subunit (bridge B1b), connecting the 2 subunits; this bridge is implicated in subunit movement. Contacts the P site tRNA; the 5S rRNA and some of its associated proteins might help stabilize positioning of ribosome-bound tRNAs. The sequence is that of Large ribosomal subunit protein uL5 from Edwardsiella ictaluri (strain 93-146).